The sequence spans 150 residues: Large ribosomal subunit protein bL9 (150 aa).

It belongs to the bacterial ribosomal protein bL9 family.

Its function is as follows. Binds to the 23S rRNA. This chain is Large ribosomal subunit protein bL9, found in Renibacterium salmoninarum (strain ATCC 33209 / DSM 20767 / JCM 11484 / NBRC 15589 / NCIMB 2235).